The following is a 478-amino-acid chain: Trigger factor (478 aa).

Residues methionine 154–glycine 167 are compositionally biased toward basic and acidic residues. Disordered stretches follow at residues methionine 154 to glycine 173 and lysine 441 to glycine 478. The 86-residue stretch at glycine 173–threonine 258 folds into the PPIase FKBP-type domain.

The protein belongs to the FKBP-type PPIase family. Tig subfamily.

The protein localises to the cytoplasm. The enzyme catalyses [protein]-peptidylproline (omega=180) = [protein]-peptidylproline (omega=0). Involved in protein export. Acts as a chaperone by maintaining the newly synthesized protein in an open conformation. Functions as a peptidyl-prolyl cis-trans isomerase. In Methylorubrum extorquens (strain CM4 / NCIMB 13688) (Methylobacterium extorquens), this protein is Trigger factor.